A 4857-amino-acid chain; its full sequence is Dual E2 ubiquitin-conjugating enzyme/E3 ubiquitin-protein ligase BIRC6 (4857 aa).

WD repeat units lie at residues 68-106 (DGLH…QASA) and 107-136 (LSAK…AVGC). The BIR repeat unit spans residues 268-377 (PELGVGPGRS…LSVTLATSPA (110 aa)). Zn(2+) contacts are provided by cysteine 328, cysteine 331, histidine 348, and cysteine 355. Residues 379 to 426 (FPCTDGTDRISCFGSGSCPHFLAAATKRGKICIWDVSKLMKVHLKFEI) form a WD 3 repeat. Disordered regions lie at residues 465 to 498 (DIPK…TSQK) and 579 to 618 (ATSP…NSEL). Acidic residues predominate over residues 472 to 482 (DSDDLLEDSDS). 5 positions are modified to phosphoserine: serine 473, serine 480, serine 482, serine 581, and serine 590. WD repeat units follow at residues 501–720 (MEVS…VQCL), 730–850 (NLCI…QHIK), 851–927 (DPQD…AKVE), and 928–966 (PPKK…FLQI). Residues 579 to 588 (ATSPISSNSH) show a composition bias toward polar residues. A compositionally biased stretch (polar residues) spans 595–618 (SRTQGESISEQGSTDNESCTNSEL). 2 disordered regions span residues 984–1004 (LSKG…PSSP) and 1053–1073 (QQQR…AAQH). The span at 992 to 1004 (SEGSKPLSNPSSP) shows a compositional bias: polar residues. The span at 1056 to 1065 (RRHPQHLHQQ) shows a compositional bias: basic residues. Threonine 1710 carries the phosphothreonine modification. Phosphoserine occurs at positions 2222 and 2955. The segment at 2945-2973 (SVTTNTTDSVSDEEKVSGGKDGNGSSTSV) is disordered. The interval 3189 to 3193 (HRRAR) is HRRAR loop; important for DIABLO/SMAC and HTRA2 binding. In terms of domain architecture, Ubiquitin-like spans 3819-4068 (DEKVTMFLQS…ESLLETCPIQ (250 aa)). The disordered stretch occupies residues 3923-3949 (QSKRAVSATPPRPPSRRGRTIPDKIGS). At threonine 3931 the chain carries Phosphothreonine. At serine 4023 the chain carries Phosphoserine. The interval 4260-4283 (RVPNSSVNQTEPQVSSSHNPTSTE) is disordered. The span at 4261-4283 (VPNSSVNQTEPQVSSSHNPTSTE) shows a compositional bias: polar residues. The UBC core domain maps to 4573–4740 (ARARRLAQEA…IRQATVKWAM (168 aa)). Cysteine 4666 functions as the Glycyl thioester intermediate in the catalytic mechanism. Positions 4835–4857 (EETLMHDQVKPSSSKELPSDFQL) are disordered. Polar residues predominate over residues 4844 to 4857 (KPSSSKELPSDFQL).

The protein belongs to the BIRC6 family. Homodimer; antiparallel. Interacts with RNF41. Interacts with DIABLO/SMAC, likely with higher affinity to SMAC dimer than SMAC monomer; this interaction blocks the substrate-binding site and inhibits the caspase inhibition activity of BIRC6. Interacts with KIF23/MKLP1, USP8/UBPY, BIRC5/survivin, MAP2K1/MEK1, RAB8A/RAB8, RAB11A/RAB11, PLK1, EXOC3/SEC6 and EXOC4/SEC8. Post-translationally, ubiquitinated; mediated by RNF41 E3 ligase and leads to proteasomal degradation, impairing inhibition of apoptosis. Deubiquitinated by USP8/UBPY. Autoubiquitinated; mediated by E1 ubiquitin activating enzyme UBA6. Proteolytically cleaved. Acts as substrate for CASP3, CASP6, CASP7, CASP9 and HTRA2. In terms of tissue distribution, expressed in brain cancer cells.

It is found in the golgi apparatus. The protein localises to the trans-Golgi network membrane. It localises to the endosome. Its subcellular location is the cytoplasm. The protein resides in the cytoskeleton. It is found in the spindle pole. The protein localises to the microtubule organizing center. It localises to the centrosome. Its subcellular location is the midbody. The protein resides in the midbody ring. The catalysed reaction is S-ubiquitinyl-[E1 ubiquitin-activating enzyme]-L-cysteine + [acceptor protein]-L-lysine = [E1 ubiquitin-activating enzyme]-L-cysteine + N(6)-monoubiquitinyl-[acceptor protein]-L-lysine.. Inhibited by DIABLO/SMAC, which competes for the substrate-binding sites on BIRC6. BIRC6 inhibits caspases and protease by ubiquitination but BIRC6 itself is subjected to protease cleavage by CASP3, CASP6, CASP7, CASP9 and HTRA2 by protease cleavage. Functionally, anti-apoptotic protein known as inhibitor of apoptosis (IAP) which can regulate cell death by controlling caspases and by acting as an E3 ubiquitin-protein ligase. Unlike most IAPs, does not contain a RING domain and it is not a RING-type E3 ligase. Instead acts as a dual E2/E3 enzyme that combines ubiquitin conjugating (E2) and ubiquitin ligase (E3) activities in a single polypeptide. Ubiquitination is mediated by a non-canonical E1 ubiquitin activating enzyme UBA6. Ubiquitinates CASP3, CASP7 and CASP9 and inhibits their caspase activity; also ubiquitinates their procaspases but to a weaker extent. Ubiquitinates pro-apoptotic factors DIABLO/SMAC and HTRA2. DIABLO/SMAC antagonizes the caspase inhibition activity of BIRC6 by competing for the same binding sites as the caspases. Ubiquitinates the autophagy protein MAP1LC3B; this activity is also inhibited by DIABLO/SMAC. Important regulator for the final stages of cytokinesis. Crucial for normal vesicle targeting to the site of abscission, but also for the integrity of the midbody and the midbody ring, and its striking ubiquitin modification. The polypeptide is Dual E2 ubiquitin-conjugating enzyme/E3 ubiquitin-protein ligase BIRC6 (BIRC6) (Homo sapiens (Human)).